The chain runs to 314 residues: 4-hydroxy-3-methylbut-2-enyl diphosphate reductase (314 aa).

Cys12 contributes to the [4Fe-4S] cluster binding site. The (2E)-4-hydroxy-3-methylbut-2-enyl diphosphate site is built by His41 and His74. Dimethylallyl diphosphate-binding residues include His41 and His74. Isopentenyl diphosphate is bound by residues His41 and His74. A [4Fe-4S] cluster-binding site is contributed by Cys96. His124 contributes to the (2E)-4-hydroxy-3-methylbut-2-enyl diphosphate binding site. A dimethylallyl diphosphate-binding site is contributed by His124. His124 is a binding site for isopentenyl diphosphate. Glu126 serves as the catalytic Proton donor. Thr167 serves as a coordination point for (2E)-4-hydroxy-3-methylbut-2-enyl diphosphate. Cys197 contacts [4Fe-4S] cluster. (2E)-4-hydroxy-3-methylbut-2-enyl diphosphate is bound by residues Ser225, Ser226, Asn227, and Ser269. Dimethylallyl diphosphate-binding residues include Ser225, Ser226, Asn227, and Ser269. Residues Ser225, Ser226, Asn227, and Ser269 each contribute to the isopentenyl diphosphate site.

It belongs to the IspH family. The cofactor is [4Fe-4S] cluster.

It carries out the reaction isopentenyl diphosphate + 2 oxidized [2Fe-2S]-[ferredoxin] + H2O = (2E)-4-hydroxy-3-methylbut-2-enyl diphosphate + 2 reduced [2Fe-2S]-[ferredoxin] + 2 H(+). The enzyme catalyses dimethylallyl diphosphate + 2 oxidized [2Fe-2S]-[ferredoxin] + H2O = (2E)-4-hydroxy-3-methylbut-2-enyl diphosphate + 2 reduced [2Fe-2S]-[ferredoxin] + 2 H(+). Its pathway is isoprenoid biosynthesis; dimethylallyl diphosphate biosynthesis; dimethylallyl diphosphate from (2E)-4-hydroxy-3-methylbutenyl diphosphate: step 1/1. The protein operates within isoprenoid biosynthesis; isopentenyl diphosphate biosynthesis via DXP pathway; isopentenyl diphosphate from 1-deoxy-D-xylulose 5-phosphate: step 6/6. Functionally, catalyzes the conversion of 1-hydroxy-2-methyl-2-(E)-butenyl 4-diphosphate (HMBPP) into a mixture of isopentenyl diphosphate (IPP) and dimethylallyl diphosphate (DMAPP). Acts in the terminal step of the DOXP/MEP pathway for isoprenoid precursor biosynthesis. In Aliivibrio salmonicida (strain LFI1238) (Vibrio salmonicida (strain LFI1238)), this protein is 4-hydroxy-3-methylbut-2-enyl diphosphate reductase.